A 193-amino-acid chain; its full sequence is Ion-translocating oxidoreductase complex subunit A (193 aa).

A run of 6 helical transmembrane segments spans residues 5–25, 39–59, 65–85, 102–122, 134–154, and 171–191; these read ILLI…FLGL, IGMG…AYLV, IPLE…AVIV, LLGI…VALL, VLYG…FAAL, and SIAL…TGLV.

It belongs to the NqrDE/RnfAE family. As to quaternary structure, the complex is composed of six subunits: RnfA, RnfB, RnfC, RnfD, RnfE and RnfG.

It localises to the cell inner membrane. Part of a membrane-bound complex that couples electron transfer with translocation of ions across the membrane. This Actinobacillus pleuropneumoniae serotype 5b (strain L20) protein is Ion-translocating oxidoreductase complex subunit A.